We begin with the raw amino-acid sequence, 89 residues long: Large ribosomal subunit protein L37-2 (89 aa).

Zn(2+)-binding residues include Cys-19, Cys-22, Cys-34, and Cys-37. A C4-type zinc finger spans residues 19–37; the sequence is CRRCGNSSYHLQKSKCSQC.

This sequence belongs to the eukaryotic ribosomal protein eL37 family. Zn(2+) serves as cofactor.

Binds to the 23S rRNA. The sequence is that of Large ribosomal subunit protein L37-2 from Drosophila melanogaster (Fruit fly).